The sequence spans 290 residues: Light-independent protochlorophyllide reductase iron-sulfur ATP-binding protein (290 aa).

ATP is bound by residues 34–39 (GIGKST) and lysine 63. Serine 38 contributes to the Mg(2+) binding site. [4Fe-4S] cluster is bound by residues cysteine 119 and cysteine 153. ATP-binding positions include 204–205 (NR) and 228–230 (PDL).

The protein belongs to the NifH/BchL/ChlL family. As to quaternary structure, homodimer. Protochlorophyllide reductase is composed of three subunits; BchL, BchN and BchB. It depends on [4Fe-4S] cluster as a cofactor.

It catalyses the reaction chlorophyllide a + oxidized 2[4Fe-4S]-[ferredoxin] + 2 ADP + 2 phosphate = protochlorophyllide a + reduced 2[4Fe-4S]-[ferredoxin] + 2 ATP + 2 H2O. The protein operates within porphyrin-containing compound metabolism; bacteriochlorophyll biosynthesis (light-independent). In terms of biological role, component of the dark-operative protochlorophyllide reductase (DPOR) that uses Mg-ATP and reduced ferredoxin to reduce ring D of protochlorophyllide (Pchlide) to form chlorophyllide a (Chlide). This reaction is light-independent. The L component serves as a unique electron donor to the NB-component of the complex, and binds Mg-ATP. In Rhodospirillum rubrum, this protein is Light-independent protochlorophyllide reductase iron-sulfur ATP-binding protein.